The following is a 382-amino-acid chain: uncharacterized protein (382 aa).

The next 12 helical transmembrane spans lie at 14–34 (GLLL…LWLA), 45–65 (VVSS…GYVI), 79–99 (FIFA…SWLA), 102–122 (FVAG…LMCS), 131–151 (LLAA…LLVS), 157–177 (LMSV…PLLF), 204–224 (LGVN…GLMP), 235–255 (ASIG…QWPI), 270–290 (VQVF…AMAP), 291–311 (ALFI…AWAC), 325–345 (ALLL…AMLM), and 348–368 (FSDN…LLML).

It belongs to the major facilitator superfamily. YcaD (TC 2.A.1.26) family.

It localises to the cell inner membrane. This is an uncharacterized protein from Shigella dysenteriae serotype 1 (strain Sd197).